A 99-amino-acid polypeptide reads, in one-letter code: Putative septation protein SpoVG (99 aa).

It belongs to the SpoVG family.

Could be involved in septation. In Onion yellows phytoplasma (strain OY-M), this protein is Putative septation protein SpoVG.